The sequence spans 374 residues: Ribosomal RNA large subunit methyltransferase G (374 aa).

The protein belongs to the methyltransferase superfamily. RlmG family.

The protein resides in the cytoplasm. The enzyme catalyses guanosine(1835) in 23S rRNA + S-adenosyl-L-methionine = N(2)-methylguanosine(1835) in 23S rRNA + S-adenosyl-L-homocysteine + H(+). Specifically methylates the guanine in position 1835 (m2G1835) of 23S rRNA. The protein is Ribosomal RNA large subunit methyltransferase G of Photobacterium profundum (strain SS9).